Reading from the N-terminus, the 258-residue chain is Regulatory protein RecX (258 aa).

It belongs to the RecX family.

Its subcellular location is the cytoplasm. Its function is as follows. Modulates RecA activity. The chain is Regulatory protein RecX from Streptococcus thermophilus (strain CNRZ 1066).